Here is a 296-residue protein sequence, read N- to C-terminus: Protein FAM110A (296 aa).

2 disordered regions span residues 61-97 and 117-192; these read NTRQ…PCSG and PVSP…KSDL. Composition is skewed to pro residues over residues 139–148 and 161–170; these read PATPPRPPPS and PASPARPYPS.

The protein belongs to the FAM110 family. In terms of assembly, may interact with CSPP1.

The protein resides in the cytoplasm. The protein localises to the cytoskeleton. Its subcellular location is the microtubule organizing center. It localises to the centrosome. It is found in the spindle pole. In Mus musculus (Mouse), this protein is Protein FAM110A (Fam110a).